We begin with the raw amino-acid sequence, 95 residues long: Large ribosomal subunit protein bL25 (95 aa).

It belongs to the bacterial ribosomal protein bL25 family. As to quaternary structure, part of the 50S ribosomal subunit; part of the 5S rRNA/L5/L18/L25 subcomplex. Contacts the 5S rRNA. Binds to the 5S rRNA independently of L5 and L18.

In terms of biological role, this is one of the proteins that binds to the 5S RNA in the ribosome where it forms part of the central protuberance. The chain is Large ribosomal subunit protein bL25 from Shewanella amazonensis (strain ATCC BAA-1098 / SB2B).